A 116-amino-acid chain; its full sequence is MGEAPAQIPTSFGHELRACLRCRLVKTYDQFRDSGCENCPFFKIEDDHERIVDVTTPNFNGIISMMDPRRSWAARWLRIGKFAPGCYTLAVSEALPEEMQFICQQARVQYVPPKRI.

The C4-type zinc-finger motif lies at 19–39 (CLRCRLVKTYDQFRDSGCENC).

The protein belongs to the SPT4 family.

Its subcellular location is the nucleus. Its function is as follows. May regulate transcription elongation by RNA polymerase II. May enhance transcriptional pausing at sites proximal to the promoter, which may in turn facilitate the assembly of an elongation competent RNA polymerase II complex. The sequence is that of Transcription elongation factor SPT4 homolog 1 from Arabidopsis thaliana (Mouse-ear cress).